A 559-amino-acid chain; its full sequence is Glycerol kinase (559 aa).

Threonine 20 provides a ligand contact to ADP. ATP-binding residues include threonine 20, serine 21, and serine 22. Threonine 20 contributes to the sn-glycerol 3-phosphate binding site. ADP is bound at residue arginine 24. The sn-glycerol 3-phosphate site is built by arginine 94, glutamate 95, and tyrosine 148. The glycerol site is built by arginine 94, glutamate 95, and tyrosine 148. A beta-D-fructose 1,6-bisphosphate-binding site is contributed by glycine 252. Aspartate 265 contributes to the sn-glycerol 3-phosphate binding site. 2 residues coordinate glycerol: aspartate 265 and glutamine 266. ADP contacts are provided by threonine 287, glycine 332, glycine 433, and asparagine 437. ATP is bound by residues threonine 287, glycine 332, and glycine 433. Residues 532 to 552 (IFCSLPLGFFIVSSMVMLIGA) traverse the membrane as a helical segment.

This sequence belongs to the FGGY kinase family. Widely expressed in fetal and adult tissues. As to expression, the sole isoform expressed in adult liver and kidney.

It localises to the mitochondrion outer membrane. The protein localises to the nucleus. Its subcellular location is the cytoplasm. The protein resides in the cytosol. The enzyme catalyses glycerol + ATP = sn-glycerol 3-phosphate + ADP + H(+). It participates in polyol metabolism; glycerol degradation via glycerol kinase pathway; sn-glycerol 3-phosphate from glycerol: step 1/1. With respect to regulation, potassium and magnesium-dependent. In terms of biological role, kinase that plays a key role in glycerol metabolism, catalyzing its phosphorylation to produce sn-glycerol 3-phosphate. Sn-glycerol 3-phosphate is a crucial intermediate in various metabolic pathways, such as the synthesis of glycerolipids and triglycerides, glycogenesis, glycolysis and gluconeogenesis. The sequence is that of Glycerol kinase from Homo sapiens (Human).